Consider the following 90-residue polypeptide: Antitoxin epsilon 1 (90 aa).

This sequence belongs to the epsilon antitoxin family. In the presence of the zeta toxin, forms an inactive PezA(2)PezT(2) heterotetramer.

In terms of biological role, antitoxin component of a type II toxin-antitoxin (TA) system. Neutralizes the toxic effect of zeta toxin. Part of a postsegregational killing (PSK) system involved in the killing of plasmid-free cells. Continuous synthesis of the epsilon antitoxin is required to counteract the zeta toxin. This is Antitoxin epsilon 1 from Enterococcus faecalis (Streptococcus faecalis).